We begin with the raw amino-acid sequence, 160 residues long: SsrA-binding protein (160 aa).

Residues 135–160 form a disordered region; the sequence is KTHDKRETIKERDWKREQSRILRDRG. A compositionally biased stretch (basic and acidic residues) spans 138-160; that stretch reads DKRETIKERDWKREQSRILRDRG.

Belongs to the SmpB family.

The protein resides in the cytoplasm. Required for rescue of stalled ribosomes mediated by trans-translation. Binds to transfer-messenger RNA (tmRNA), required for stable association of tmRNA with ribosomes. tmRNA and SmpB together mimic tRNA shape, replacing the anticodon stem-loop with SmpB. tmRNA is encoded by the ssrA gene; the 2 termini fold to resemble tRNA(Ala) and it encodes a 'tag peptide', a short internal open reading frame. During trans-translation Ala-aminoacylated tmRNA acts like a tRNA, entering the A-site of stalled ribosomes, displacing the stalled mRNA. The ribosome then switches to translate the ORF on the tmRNA; the nascent peptide is terminated with the 'tag peptide' encoded by the tmRNA and targeted for degradation. The ribosome is freed to recommence translation, which seems to be the essential function of trans-translation. The sequence is that of SsrA-binding protein from Sphingomonas elodea.